Reading from the N-terminus, the 402-residue chain is MEQKIAIALKEIARGTNEIIGLEYIEKLVRKYYETNERFIVKAGFDPTAPDLHLGHTVLIQKLALLQQYGARVKFLIGDFTAMIGDPTGKNETRKPLNREQVLENAKTYEEQIYKILDEKHTEVCFNSTWLDALGAKGMIELCAKFSVARMLERDDFTKRYKENRPISIVEFLYPLLQGYDSVAMDADIELGGNDQKFNLLVGRFLQRAYGLNKEQSVITMPLLEGLDGVQKMSKSLGNYVGITEEPNAMFGKIMSVSDDLMWRYYTLLSTKTLEEIEDLKHGILNQTLHPKAVKEDLASEIVARYYDNDQAIKAKEQFSKVFSANLLPEILSESDFDEGVGILDVLKQIGFCPSTSQARRDIQGGGVKINQEVIKNESYRFVKGNYVIQLGKKRFMKLNIN.

Residues 47 to 56 (PTAPDLHLGH) carry the 'HIGH' region motif. The 'KMSKS' region signature appears at 232 to 236 (KMSKS). An ATP-binding site is contributed by Lys235. The region spanning 341–401 (VGILDVLKQI…GKKRFMKLNI (61 aa)) is the S4 RNA-binding domain.

It belongs to the class-I aminoacyl-tRNA synthetase family. TyrS type 2 subfamily. In terms of assembly, homodimer.

It is found in the cytoplasm. It catalyses the reaction tRNA(Tyr) + L-tyrosine + ATP = L-tyrosyl-tRNA(Tyr) + AMP + diphosphate + H(+). Catalyzes the attachment of tyrosine to tRNA(Tyr) in a two-step reaction: tyrosine is first activated by ATP to form Tyr-AMP and then transferred to the acceptor end of tRNA(Tyr). The sequence is that of Tyrosine--tRNA ligase from Helicobacter pylori (strain ATCC 700392 / 26695) (Campylobacter pylori).